Here is a 421-residue protein sequence, read N- to C-terminus: Polygalacturonase (421 aa).

The N-terminal stretch at 1 to 20 (MKFSTAIIVSFLFIADFCAA) is a signal peptide. Residues Asn-156 and Asn-180 are each glycosylated (N-linked (GlcNAc...) asparagine). PbH1 repeat units follow at residues 178–204 (CKNI…HMGK) and 205–226 (STDV…SIGD). Asp-219 serves as the catalytic Proton donor. His-242 is a catalytic residue. PbH1 repeat units follow at residues 258–279 (VEGI…RIKT) and 289–310 (VSDI…IIDQ). Asn-265 carries N-linked (GlcNAc...) asparagine glycosylation. A disordered region spans residues 394-421 (PGAPAASTTATPAASKTATPAAGKSPAK).

It belongs to the glycosyl hydrolase 28 family. Pollen specific.

The protein localises to the secreted. It localises to the cell wall. It catalyses the reaction (1,4-alpha-D-galacturonosyl)n+m + H2O = (1,4-alpha-D-galacturonosyl)n + (1,4-alpha-D-galacturonosyl)m.. Functionally, may function in the depolymerization of the pectin in its walls during pollen tube elongation, or in that of the pistil during pollination. This chain is Polygalacturonase, found in Medicago sativa (Alfalfa).